Consider the following 147-residue polypeptide: UPF0216 protein MK1676 (147 aa).

It belongs to the UPF0216 family.

The sequence is that of UPF0216 protein MK1676 from Methanopyrus kandleri (strain AV19 / DSM 6324 / JCM 9639 / NBRC 100938).